A 111-amino-acid polypeptide reads, in one-letter code: MEKNNTTKPRKIGPYFLSKVTITYWLDGCVFLSVPASEISISNIAGSIPSINCWVISTGKPLSLEILADALSKSSSWAPDLKLQEWQIISSYQYKLLFVPQCGQVLSKGST.

This is an uncharacterized protein from Saccharomyces cerevisiae (strain ATCC 204508 / S288c) (Baker's yeast).